An 85-amino-acid chain; its full sequence is Transcription factor 4 (85 aa).

The region spanning 7–60 (ERRMANNARERLRVRDINEAFKELGRMVQLHLKSDKPQTKLLILHQAVAVILSL) is the bHLH domain. The tract at residues 62-85 (QQVRERNLNPKAACLKRREEEKVS) is class A specific domain.

In terms of assembly, efficient DNA binding requires dimerization with another bHLH protein. Forms homo- or heterooligomers with myogenin.

The protein localises to the nucleus. Functionally, transcription factor that binds to the immunoglobulin enhancer Mu-E5/KE5-motif. Involved in the initiation of neuronal differentiation. Binds to the E-box present in the somatostatin receptor 2 initiator element (SSTR2-INR) to activate transcription. The protein is Transcription factor 4 (TCF4) of Gallus gallus (Chicken).